The sequence spans 299 residues: Non-homologous end-joining factor 1 (299 aa).

Positions 1–135 (MEELEQGLLM…ASPSLVSQHL (135 aa)) are globular head. Positions 128 to 170 (PSLVSQHLIRPLMGMSLALQCQVRELATLLHMKDLEIQDYQES) form a coiled coil. A phosphoserine; by PRKDC mark is found at S132, S203, S245, and S251. The C-terminal tail stretch occupies residues 224 to 288 (QEVQVGQKHQ…GPLQRPQLSK (65 aa)). Residues 255-266 (NQPEQLVSSAPT) are compositionally biased toward polar residues. The tract at residues 255 to 299 (NQPEQLVSSAPTLSAPEKESTGTSGPLQRPQLSKVKRKKPRGLFS) is disordered. Phosphoserine is present on S263. Position 266 is a phosphothreonine (T266). S287 carries the phosphoserine modification. A compositionally biased stretch (basic residues) spans 288 to 299 (KVKRKKPRGLFS). An XLM motif is present at residues 289–299 (VKRKKPRGLFS).

Belongs to the XRCC4-XLF family. XLF subfamily. As to quaternary structure, homodimer; mainly exists as a homodimer when not associated with XRCC4. Interacts with XRCC4; the interaction is direct and is mediated via a head-to-head interaction between N-terminal head regions. Component of the core long-range non-homologous end joining (NHEJ) complex (also named DNA-PK complex) composed of PRKDC, LIG4, XRCC4, XRCC6/Ku70, XRCC5/Ku86 and NHEJ1/XLF. Additional component of the NHEJ complex includes PAXX. Following autophosphorylation, PRKDC dissociates from DNA, leading to formation of the short-range NHEJ complex, composed of LIG4, XRCC4, XRCC6/Ku70, XRCC5/Ku86 and NHEJ1/XLF. Interacts with POLL (DNA polymerase lambda); promoting POLL recruitment to double-strand breaks (DSBs) and stimulation of the end-filling activity of POLL. In terms of processing, phosphorylated by PRKDC at the C-terminus in response to DNA damage. Phosphorylations by PRKDC at the C-terminus of XRCC4 and NHEJ1/XLF are highly redundant and regulate ability of the XRCC4-NHEJ1/XLF subcomplex to bridge DNA. Phosphorylation does not prevent interaction with XRCC4 but disrupts ability to bridge DNA and promotes detachment from DNA. Ubiquitously expressed.

The protein resides in the nucleus. Its subcellular location is the chromosome. DNA repair protein involved in DNA non-homologous end joining (NHEJ); it is required for double-strand break (DSB) repair and V(D)J recombination and is also involved in telomere maintenance. Plays a key role in NHEJ by promoting the ligation of various mismatched and non-cohesive ends. Together with PAXX, collaborates with DNA polymerase lambda (POLL) to promote joining of non-cohesive DNA ends. May act in concert with XRCC5-XRCC6 (Ku) to stimulate XRCC4-mediated joining of blunt ends and several types of mismatched ends that are non-complementary or partially complementary. In some studies, has been shown to associate with XRCC4 to form alternating helical filaments that bridge DNA and act like a bandage, holding together the broken DNA until it is repaired. Alternatively, it has also been shown that rather than forming filaments, a single NHEJ1 dimer interacts through both head domains with XRCC4 to promote the close alignment of DNA ends. The XRCC4-NHEJ1/XLF subcomplex binds to the DNA fragments of a DSB in a highly diffusive manner and robustly bridges two independent DNA molecules, holding the broken DNA fragments in close proximity to one other. The mobility of the bridges ensures that the ends remain accessible for further processing by other repair factors. Binds DNA in a length-dependent manner. The chain is Non-homologous end-joining factor 1 from Homo sapiens (Human).